We begin with the raw amino-acid sequence, 332 residues long: MSVQTSSNRPLPQANLHIATETPEADSRIRSAPRPGQDPYPTRLSEPLDLPWLNRREPVVKGEEADGPLSAAQLDTFERQGFIFEPDFLKGEELEALRHELNALLARDDFRGRDFAITEPQGNEIRSLFAVHYLSRVFSRLANDERLMGRARQILGGEPYVHQSRINYKPGFEGKGFNWHSDFETWHAEDGMPAMHAVSASIVLTDNHTFNGPLMLVPGSHRVFVPCLGETPEDHHRQSLKTQEFGVPSRQALRELIDRHGIEAPTGAAGGLLLFDCNTLHGSNANMSPDPRSNAFFVYNRRDNRCVEPYAASKRRPRFLAHEPDEAWSPDG.

A compositionally biased stretch (polar residues) spans 1 to 10; sequence MSVQTSSNRP. Residues 1 to 47 are disordered; the sequence is MSVQTSSNRPLPQANLHIATETPEADSRIRSAPRPGQDPYPTRLSEP. Gln-163 provides a ligand contact to L-ectoine. Lys-169 is a binding site for 2-oxoglutarate. 3 residues coordinate Fe cation: His-180, Asp-182, and His-281.

It belongs to the PhyH family. EctD subfamily. As to quaternary structure, homodimer. Requires Fe(2+) as cofactor.

The catalysed reaction is L-ectoine + 2-oxoglutarate + O2 = 5-hydroxyectoine + succinate + CO2. Functionally, involved in the biosynthesis of 5-hydroxyectoine, called compatible solute, which helps organisms to survive extreme osmotic stress by acting as a highly soluble organic osmolyte. Catalyzes the 2-oxoglutarate-dependent selective hydroxylation of L-ectoine to yield (4S,5S)-5-hydroxyectoine. The sequence is that of Ectoine dioxygenase from Halomonas elongata (strain ATCC 33173 / DSM 2581 / NBRC 15536 / NCIMB 2198 / 1H9).